The sequence spans 354 residues: Dihydroorotate dehydrogenase (quinone) (354 aa).

FMN-binding positions include 70-74 (AGFDK) and Thr94. Lys74 lines the substrate pocket. Position 119–123 (119–123 (NAMGF)) interacts with substrate. Residues Asn148 and Asn181 each contribute to the FMN site. Asn181 serves as a coordination point for substrate. Ser184 serves as the catalytic Nucleophile. Position 186 (Asn186) interacts with substrate. Residues Lys217 and Thr245 each contribute to the FMN site. Substrate is bound at residue 246 to 247 (NT). FMN contacts are provided by residues Gly265, Gly294, and 315–316 (YS).

Belongs to the dihydroorotate dehydrogenase family. Type 2 subfamily. Monomer. It depends on FMN as a cofactor.

Its subcellular location is the cell membrane. The enzyme catalyses (S)-dihydroorotate + a quinone = orotate + a quinol. It participates in pyrimidine metabolism; UMP biosynthesis via de novo pathway; orotate from (S)-dihydroorotate (quinone route): step 1/1. Its function is as follows. Catalyzes the conversion of dihydroorotate to orotate with quinone as electron acceptor. In Sulfurovum sp. (strain NBC37-1), this protein is Dihydroorotate dehydrogenase (quinone).